We begin with the raw amino-acid sequence, 184 residues long: ATP synthase subunit b, chloroplastic (184 aa).

Residues 27–49 form a helical membrane-spanning segment; that stretch reads LATNPINLSVVLGVLIFFGKGVL.

It belongs to the ATPase B chain family. In terms of assembly, F-type ATPases have 2 components, F(1) - the catalytic core - and F(0) - the membrane proton channel. F(1) has five subunits: alpha(3), beta(3), gamma(1), delta(1), epsilon(1). F(0) has four main subunits: a(1), b(1), b'(1) and c(10-14). The alpha and beta chains form an alternating ring which encloses part of the gamma chain. F(1) is attached to F(0) by a central stalk formed by the gamma and epsilon chains, while a peripheral stalk is formed by the delta, b and b' chains.

Its subcellular location is the plastid. It is found in the chloroplast thylakoid membrane. F(1)F(0) ATP synthase produces ATP from ADP in the presence of a proton or sodium gradient. F-type ATPases consist of two structural domains, F(1) containing the extramembraneous catalytic core and F(0) containing the membrane proton channel, linked together by a central stalk and a peripheral stalk. During catalysis, ATP synthesis in the catalytic domain of F(1) is coupled via a rotary mechanism of the central stalk subunits to proton translocation. In terms of biological role, component of the F(0) channel, it forms part of the peripheral stalk, linking F(1) to F(0). The sequence is that of ATP synthase subunit b, chloroplastic from Pelargonium hortorum (Common geranium).